The primary structure comprises 506 residues: Acetaldehyde dehydrogenase (506 aa).

Residues Glu262 and Cys301 contribute to the active site.

The protein belongs to the aldehyde dehydrogenase family.

It catalyses the reaction acetaldehyde + NAD(+) + H2O = acetate + NADH + 2 H(+). The protein operates within alcohol metabolism; ethanol degradation; acetate from ethanol: step 2/2. Functionally, catalyzes the NAD(+)-dependent oxidation of acetaldehyde to acetate. Is likely a component of the ethanol oxidation system that allows P.aeruginosa to grow on ethanol as the sole carbon and energy source. The protein is Acetaldehyde dehydrogenase of Pseudomonas aeruginosa.